A 134-amino-acid chain; its full sequence is Small ribosomal subunit protein uS11 (134 aa).

Residues D114–L134 form a disordered region. Residues R125–L134 are compositionally biased toward basic residues.

Belongs to the universal ribosomal protein uS11 family.

This Candida albicans (Yeast) protein is Small ribosomal subunit protein uS11 (RPS14).